Here is a 298-residue protein sequence, read N- to C-terminus: Probable endonuclease 4 (298 aa).

Zn(2+) is bound by residues histidine 70, histidine 111, glutamate 146, aspartate 180, histidine 183, histidine 215, aspartate 228, histidine 230, and glutamate 260.

The protein belongs to the AP endonuclease 2 family. The cofactor is Zn(2+).

It catalyses the reaction Endonucleolytic cleavage to 5'-phosphooligonucleotide end-products.. Endonuclease IV plays a role in DNA repair. It cleaves phosphodiester bonds at apurinic or apyrimidinic (AP) sites, generating a 3'-hydroxyl group and a 5'-terminal sugar phosphate. The protein is Probable endonuclease 4 of Halalkalibacterium halodurans (strain ATCC BAA-125 / DSM 18197 / FERM 7344 / JCM 9153 / C-125) (Bacillus halodurans).